A 400-amino-acid polypeptide reads, in one-letter code: Enoyl-[acyl-carrier-protein] reductase [NADH] (400 aa).

Residues 48–53 (GSSSGY), 74–75 (FE), 111–112 (DA), and 139–140 (LA) contribute to the NAD(+) site. Residue Tyr225 participates in substrate binding. The Proton donor role is filled by Tyr235. NAD(+)-binding positions include Lys244 and 273–275 (VVT).

It belongs to the TER reductase family. In terms of assembly, monomer.

The catalysed reaction is a 2,3-saturated acyl-[ACP] + NAD(+) = a (2E)-enoyl-[ACP] + NADH + H(+). The protein operates within lipid metabolism; fatty acid biosynthesis. Functionally, involved in the final reduction of the elongation cycle of fatty acid synthesis (FAS II). Catalyzes the reduction of a carbon-carbon double bond in an enoyl moiety that is covalently linked to an acyl carrier protein (ACP). The chain is Enoyl-[acyl-carrier-protein] reductase [NADH] from Aliivibrio fischeri (strain MJ11) (Vibrio fischeri).